A 238-amino-acid polypeptide reads, in one-letter code: Ribonuclease PH (238 aa).

Phosphate-binding positions include R86 and 124 to 126; that span reads GTR.

Belongs to the RNase PH family. Homohexameric ring arranged as a trimer of dimers.

The enzyme catalyses tRNA(n+1) + phosphate = tRNA(n) + a ribonucleoside 5'-diphosphate. In terms of biological role, phosphorolytic 3'-5' exoribonuclease that plays an important role in tRNA 3'-end maturation. Removes nucleotide residues following the 3'-CCA terminus of tRNAs; can also add nucleotides to the ends of RNA molecules by using nucleoside diphosphates as substrates, but this may not be physiologically important. Probably plays a role in initiation of 16S rRNA degradation (leading to ribosome degradation) during starvation. This chain is Ribonuclease PH, found in Geobacter sulfurreducens (strain ATCC 51573 / DSM 12127 / PCA).